A 120-amino-acid chain; its full sequence is MKVSEAALSLLVLILIITSASRSQPKVPEWVNTPSTCCLKYYEKVLPRRLVVGYRKALNCHLPAIIFVTKRNREVCTNPNDDWVQEYIKDPNLPLLPTRNLSTVKIITAKNGQPQLLNSQ.

A signal peptide spans 1–23; sequence MKVSEAALSLLVLILIITSASRS. Cystine bridges form between Cys-37–Cys-60 and Cys-38–Cys-76.

The protein belongs to the intercrine beta (chemokine CC) family. Mainly expressed in liver, also found in spleen and thymus. Highly expressed in LPS- and IFN-gamma-activated monocytes, weakly in some lymphocytes, including natural killer cells, gamma-delta T-cells, and some T-cell clones.

It localises to the secreted. Its function is as follows. Shows chemotactic activity for lymphocytes and monocytes but not neutrophils. Also shows potent myelosuppressive activity, suppresses proliferation of myeloid progenitor cells. Recombinant SCYA16 shows chemotactic activity for monocytes and THP-1 monocytes, but not for resting lymphocytes and neutrophils. Induces a calcium flux in THP-1 cells that were desensitized by prior expression to RANTES. This is C-C motif chemokine 16 (CCL16) from Homo sapiens (Human).